A 908-amino-acid polypeptide reads, in one-letter code: Protein translocase subunit SecA (908 aa).

Residues Q87, 105–109, and D512 contribute to the ATP site; that span reads GEGKT. A disordered region spans residues 865–908; that stretch reads GGDDGSDEMMAHTPMIRDGDKVGRNDPCPCGSGRKYKQCHGKLS. The segment covering 879-888 has biased composition (basic and acidic residues); sequence MIRDGDKVGR. Zn(2+) is bound by residues C892, C894, C903, and H904. Residues 898–908 show a composition bias toward basic residues; sequence RKYKQCHGKLS.

Belongs to the SecA family. As to quaternary structure, monomer and homodimer. Part of the essential Sec protein translocation apparatus which comprises SecA, SecYEG and auxiliary proteins SecDF-YajC and YidC. It depends on Zn(2+) as a cofactor.

Its subcellular location is the cell inner membrane. It is found in the cytoplasm. The enzyme catalyses ATP + H2O + cellular proteinSide 1 = ADP + phosphate + cellular proteinSide 2.. Part of the Sec protein translocase complex. Interacts with the SecYEG preprotein conducting channel. Has a central role in coupling the hydrolysis of ATP to the transfer of proteins into and across the cell membrane, serving both as a receptor for the preprotein-SecB complex and as an ATP-driven molecular motor driving the stepwise translocation of polypeptide chains across the membrane. This Shewanella sp. (strain ANA-3) protein is Protein translocase subunit SecA.